The following is a 101-amino-acid chain: Small ribosomal subunit protein bS18c (101 aa).

Positions 82–101 (KQFERAESTPRTPGPRTRNK) are disordered.

It belongs to the bacterial ribosomal protein bS18 family. As to quaternary structure, part of the 30S ribosomal subunit.

The protein localises to the plastid. Its subcellular location is the chloroplast. In Platanus occidentalis (Sycamore), this protein is Small ribosomal subunit protein bS18c.